Reading from the N-terminus, the 111-residue chain is Ig kappa chain V-III region PC 2880/PC 1229 (111 aa).

The framework-1 stretch occupies residues 1 to 23; it reads DIVLTQSPASLAVSLGQRATISC. An intrachain disulfide couples Cys23 to Cys92. The complementarity-determining-1 stretch occupies residues 24–38; the sequence is RASESVDNYGISFMN. A framework-2 region spans residues 39 to 53; sequence WFQQKPGQPPKLLIY. The segment at 54-60 is complementarity-determining-2; the sequence is AASNQGS. Positions 61-92 are framework-3; sequence GVPARFSGSGSGTDFSLNIHPMEEDDTAMYFC. The tract at residues 93 to 101 is complementarity-determining-3; that stretch reads QQSKEVPWT. The interval 102–111 is framework-4; the sequence is FGGGTKLEIK.

This chain is Ig kappa chain V-III region PC 2880/PC 1229, found in Mus musculus (Mouse).